The following is a 531-amino-acid chain: RCC1 and BTB domain-containing protein 1 (531 aa).

RCC1 repeat units follow at residues 40–91 (NDEV…LLST), 93–145 (DGVV…ALAA), 147–198 (GEVF…AVLD), 199–250 (NGEV…ALTD), 252–302 (GLLY…AAKT), and 304–356 (GGHV…FLTV). 2 BTB domains span residues 370 to 437 (ADLK…DLPP) and 470 to 499 (ENAF…INHL).

Ubiquitously expressed. In the retina, present in the nerve fiber layer and to a lesser extent in the inner and outer plexiform layers (at protein level).

It localises to the nucleus. Functionally, may be involved in cell cycle regulation by chromatin remodeling. The chain is RCC1 and BTB domain-containing protein 1 (RCBTB1) from Homo sapiens (Human).